The sequence spans 158 residues: Peroxidase (158 aa).

Pro2 provides a ligand contact to substrate. His32 provides a ligand contact to heme b. Residue Thr33 participates in Ca(2+) binding. Cys39 and Cys64 are disulfide-bonded. Asn48 is a glycosylation site (N-linked (GlcNAc...) asparagine). Asp78, Thr81, and Asp86 together coordinate Ca(2+).

This sequence belongs to the peroxidase family. Classical plant (class III) peroxidase subfamily. Ca(2+) serves as cofactor. Heme b is required as a cofactor.

It catalyses the reaction 2 a phenolic donor + H2O2 = 2 a phenolic radical donor + 2 H2O. In terms of biological role, removal of H(2)O(2), oxidation of toxic reductants, biosynthesis and degradation of lignin, suberization, auxin catabolism, response to environmental stresses such as wounding, pathogen attack and oxidative stress. These functions might be dependent on each isozyme/isoform in each plant tissue. This is Peroxidase from Lupinus polyphyllus (Large-leaved lupine).